A 176-amino-acid chain; its full sequence is Urease accessory protein UreE (176 aa).

A disordered region spans residues 147–176 (AGAYQQGGGHSHGHAHSHSHEKPHSHTHNH).

This sequence belongs to the UreE family.

It localises to the cytoplasm. Its function is as follows. Involved in urease metallocenter assembly. Binds nickel. Probably functions as a nickel donor during metallocenter assembly. In Alcanivorax borkumensis (strain ATCC 700651 / DSM 11573 / NCIMB 13689 / SK2), this protein is Urease accessory protein UreE.